The primary structure comprises 516 residues: MTRLALLSVSDKTGIIDLAQQLIHQFDFELISSGGTAKALQAAGLPVTKVSEYTGSPEILGGRVKTLHPRIHGGILGRRDLPQDTQDMETHQIHPIDLVVVNLYPFEQTIANPNVTVAEAIENIDIGGPTLLRAAAKNYAHVTVLSNPKYYDTYLQELAENNGEVSLEFRQKMAGETFALTNSYDGAIANYFMTLSSENESTLPSRFTVSGTQFQSLRYGENPHQQAAWYQTGTQPSGWAAATQLQGKELSYNNLVDLEAARRIIAEFNPQEPAVAILKHTNPCGVAVGNTLADAYEKAFNADSISAFGGIIALNQPLDKETASLLTKTFLECVVAPGCDDEAKEILTAKSKVRVLVLPDLMNGPKQTIKVIAGGLLVQASDDVIDTPDSWKIVTEKQPTLQQLAELLFAWKVAKHVKSNAIVVTKNRTTLGIGAGQMNRVGSVKIALEQAGEAAMGGCLASDGFFPFDDSVRTAAAAGIKVIVQPGGSVKDKDSIAAANELGLVMMLTGIRHFLH.

The 146-residue stretch at 1–146 (MTRLALLSVS…KNYAHVTVLS (146 aa)) folds into the MGS-like domain.

This sequence belongs to the PurH family.

The enzyme catalyses (6R)-10-formyltetrahydrofolate + 5-amino-1-(5-phospho-beta-D-ribosyl)imidazole-4-carboxamide = 5-formamido-1-(5-phospho-D-ribosyl)imidazole-4-carboxamide + (6S)-5,6,7,8-tetrahydrofolate. It catalyses the reaction IMP + H2O = 5-formamido-1-(5-phospho-D-ribosyl)imidazole-4-carboxamide. The protein operates within purine metabolism; IMP biosynthesis via de novo pathway; 5-formamido-1-(5-phospho-D-ribosyl)imidazole-4-carboxamide from 5-amino-1-(5-phospho-D-ribosyl)imidazole-4-carboxamide (10-formyl THF route): step 1/1. It participates in purine metabolism; IMP biosynthesis via de novo pathway; IMP from 5-formamido-1-(5-phospho-D-ribosyl)imidazole-4-carboxamide: step 1/1. In Rippkaea orientalis (strain PCC 8801 / RF-1) (Cyanothece sp. (strain PCC 8801)), this protein is Bifunctional purine biosynthesis protein PurH.